The following is a 1275-amino-acid chain: Surfactin synthase subunit 3 (1275 aa).

Residues 968–1043 (GPRNEMEETI…GISAYLKNGG (76 aa)) form the Carrier domain. Residue Ser-1003 is modified to O-(pantetheine 4'-phosphoryl)serine. Positions 1059–1271 (QIIFAFPPVL…ILLEFLNTQT (213 aa)) are thioesterase. Active-site residues include Ser-1120, Asp-1147, and His-1247.

It belongs to the ATP-dependent AMP-binding enzyme family. Pantetheine 4'-phosphate is required as a cofactor.

Its pathway is antibiotic biosynthesis; surfactin biosynthesis. Its function is as follows. Probably activates a leucine. This is Surfactin synthase subunit 3 (srfAC) from Bacillus subtilis (strain 168).